The chain runs to 348 residues: (+)-germacrene D synthase (348 aa).

Positions 97, 101, 242, and 246 each coordinate Mg(2+). The DDXXD motif signature appears at 97-101 (DDILD).

This sequence belongs to the terpene synthase family. Mg(2+) serves as cofactor.

The enzyme catalyses (2E,6E)-farnesyl diphosphate = (+)-germacrene D + diphosphate. The protein operates within secondary metabolite biosynthesis; terpenoid biosynthesis. Functionally, sesquiterpene synthase converting farnesyl diphosphate to eight sesquiterpenes, with (+)-germacrene D and an unidentified oxygenated sesquiterpene as the major products. Has no diterpene synthase activity. The polypeptide is (+)-germacrene D synthase (Selaginella moellendorffii (Spikemoss)).